The sequence spans 268 residues: Pantothenate synthetase (268 aa).

18 to 25 (MGYLHEGH) provides a ligand contact to ATP. His-25 functions as the Proton donor in the catalytic mechanism. Position 49 (Gln-49) interacts with (R)-pantoate. Gln-49 lines the beta-alanine pocket. Position 135–138 (135–138 (GQKD)) interacts with ATP. A (R)-pantoate-binding site is contributed by Gln-141. ATP is bound by residues Val-164 and 172-175 (LSSR).

The protein belongs to the pantothenate synthetase family. In terms of assembly, homodimer.

The protein resides in the cytoplasm. The catalysed reaction is (R)-pantoate + beta-alanine + ATP = (R)-pantothenate + AMP + diphosphate + H(+). It functions in the pathway cofactor biosynthesis; (R)-pantothenate biosynthesis; (R)-pantothenate from (R)-pantoate and beta-alanine: step 1/1. Catalyzes the condensation of pantoate with beta-alanine in an ATP-dependent reaction via a pantoyl-adenylate intermediate. In Dehalococcoides mccartyi (strain ATCC BAA-2266 / KCTC 15142 / 195) (Dehalococcoides ethenogenes (strain 195)), this protein is Pantothenate synthetase.